The sequence spans 157 residues: Secreted effector protein See1 (157 aa).

A signal peptide spans 1–21 (MLFTTFVSLLLVILCLVHVSA). The segment at 124–157 (SYRYGDSHGNSREAEYSVADHQSASGEYKFGPTT) is disordered. A compositionally biased stretch (basic and acidic residues) spans 128-138 (GDSHGNSREAE).

Interacts with a maize homolog of SGT1, a factor acting in cell cycle progression in yeast Saccharomyces cerevisiae and an important component of plant and human innate immunity.

The protein localises to the secreted. The protein resides in the host cytoplasm. It is found in the host nucleus. Functionally, effector protein involved in the induction of tumors in infected plant tissues by the fungus. Required for the reactivation of plant DNA synthesis, which is crucial for tumor progression in leaf cells. Interferes with the MAPK-triggered phosphorylation of maize SGT1 at a monocot-specific phosphorylation site, resulting in both modulation of immune responses and reactivation of DNA synthesis during leaf tumor formation. This Mycosarcoma maydis (Corn smut fungus) protein is Secreted effector protein See1.